Reading from the N-terminus, the 386-residue chain is Acetylornithine aminotransferase (386 aa).

Pyridoxal 5'-phosphate contacts are provided by residues 96 to 97 (GA) and Phe-123. A N(2)-acetyl-L-ornithine-binding site is contributed by Arg-126. Residue 208-211 (DEVQ) coordinates pyridoxal 5'-phosphate. Lys-237 is modified (N6-(pyridoxal phosphate)lysine). A N(2)-acetyl-L-ornithine-binding site is contributed by Ser-265. Thr-266 is a pyridoxal 5'-phosphate binding site.

Belongs to the class-III pyridoxal-phosphate-dependent aminotransferase family. ArgD subfamily. Homodimer. Pyridoxal 5'-phosphate is required as a cofactor.

It is found in the cytoplasm. It carries out the reaction N(2)-acetyl-L-ornithine + 2-oxoglutarate = N-acetyl-L-glutamate 5-semialdehyde + L-glutamate. It functions in the pathway amino-acid biosynthesis; L-arginine biosynthesis; N(2)-acetyl-L-ornithine from L-glutamate: step 4/4. The chain is Acetylornithine aminotransferase from Bacillus anthracis.